Consider the following 460-residue polypeptide: Elongation factor 1-alpha (460 aa).

Position 2 is a n,N,N-trimethylglycine (G2). K3 bears the N6,N6-dimethyllysine; alternate mark. K3 carries the post-translational modification N6-methyllysine; alternate. The tr-type G domain occupies 5–240; the sequence is KTHVNLVVIG…DAIEPPVRPS (236 aa). Positions 14–21 are G1; sequence GHVDAGKS. GTP is bound at residue 14–21; that stretch reads GHVDAGKS. K30 carries the post-translational modification N6-methyllysine. Residues 70 to 74 are G2; the sequence is GITID. N6,N6,N6-trimethyllysine is present on K79. A G3 region spans residues 91–94; that stretch reads DAPG. Residues 91–95 and 153–156 each bind GTP; these read DAPGH and NKMD. Residues 153-156 are G4; the sequence is NKMD. Residues 192 to 194 are G5; that stretch reads SGW. The residue at position 317 (K317) is an N6,N6-dimethyllysine; alternate. An N6-methyllysine; alternate modification is found at K317. K391 is modified (N6-methyllysine).

The protein belongs to the TRAFAC class translation factor GTPase superfamily. Classic translation factor GTPase family. EF-Tu/EF-1A subfamily.

The protein resides in the cytoplasm. In terms of biological role, this protein promotes the GTP-dependent binding of aminoacyl-tRNA to the A-site of ribosomes during protein biosynthesis. In Yarrowia lipolytica (strain CLIB 122 / E 150) (Yeast), this protein is Elongation factor 1-alpha (TEF).